The chain runs to 177 residues: Peptide methionine sulfoxide reductase MsrA (177 aa).

Cysteine 15 is an active-site residue.

This sequence belongs to the MsrA Met sulfoxide reductase family.

The catalysed reaction is L-methionyl-[protein] + [thioredoxin]-disulfide + H2O = L-methionyl-(S)-S-oxide-[protein] + [thioredoxin]-dithiol. It carries out the reaction [thioredoxin]-disulfide + L-methionine + H2O = L-methionine (S)-S-oxide + [thioredoxin]-dithiol. Functionally, has an important function as a repair enzyme for proteins that have been inactivated by oxidation. Catalyzes the reversible oxidation-reduction of methionine sulfoxide in proteins to methionine. This Listeria welshimeri serovar 6b (strain ATCC 35897 / DSM 20650 / CCUG 15529 / CIP 8149 / NCTC 11857 / SLCC 5334 / V8) protein is Peptide methionine sulfoxide reductase MsrA.